Reading from the N-terminus, the 453-residue chain is Tubulin alpha-2 chain (453 aa).

Residue Q11 coordinates GTP. K40 is subject to N6-acetyllysine. Positions 71, 144, 145, 179, 206, and 228 each coordinate GTP. E71 lines the Mg(2+) pocket. E254 is an active-site residue. Residues 432 to 453 are disordered; it reads YEEVGAETAEGEGEEEDFGEEY.

This sequence belongs to the tubulin family. Dimer of alpha and beta chains. A typical microtubule is a hollow water-filled tube with an outer diameter of 25 nm and an inner diameter of 15 nM. Alpha-beta heterodimers associate head-to-tail to form protofilaments running lengthwise along the microtubule wall with the beta-tubulin subunit facing the microtubule plus end conferring a structural polarity. Microtubules usually have 13 protofilaments but different protofilament numbers can be found in some organisms and specialized cells. Requires Mg(2+) as cofactor. Post-translationally, undergoes a tyrosination/detyrosination cycle, the cyclic removal and re-addition of a C-terminal tyrosine residue by the enzymes tubulin tyrosine carboxypeptidase (TTCP) and tubulin tyrosine ligase (TTL), respectively. Acetylation of alpha chains at Lys-40 stabilizes microtubules and affects affinity and processivity of microtubule motors. This modification has a role in multiple cellular functions, ranging from cell motility, cell cycle progression or cell differentiation to intracellular trafficking and signaling.

Its subcellular location is the cytoplasm. It localises to the cytoskeleton. The catalysed reaction is GTP + H2O = GDP + phosphate + H(+). In terms of biological role, tubulin is the major constituent of microtubules, a cylinder consisting of laterally associated linear protofilaments composed of alpha- and beta-tubulin heterodimers. Microtubules grow by the addition of GTP-tubulin dimers to the microtubule end, where a stabilizing cap forms. Below the cap, tubulin dimers are in GDP-bound state, owing to GTPase activity of alpha-tubulin. This chain is Tubulin alpha-2 chain (TUBA2), found in Pelvetia fastigiata (Brown alga).